The following is a 194-amino-acid chain: ATP synthase subunit delta (194 aa).

It belongs to the ATPase delta chain family. As to quaternary structure, F-type ATPases have 2 components, F(1) - the catalytic core - and F(0) - the membrane proton channel. F(1) has five subunits: alpha(3), beta(3), gamma(1), delta(1), epsilon(1). F(0) has three main subunits: a(1), b(2) and c(10-14). The alpha and beta chains form an alternating ring which encloses part of the gamma chain. F(1) is attached to F(0) by a central stalk formed by the gamma and epsilon chains, while a peripheral stalk is formed by the delta and b chains.

Its subcellular location is the cell inner membrane. In terms of biological role, f(1)F(0) ATP synthase produces ATP from ADP in the presence of a proton or sodium gradient. F-type ATPases consist of two structural domains, F(1) containing the extramembraneous catalytic core and F(0) containing the membrane proton channel, linked together by a central stalk and a peripheral stalk. During catalysis, ATP synthesis in the catalytic domain of F(1) is coupled via a rotary mechanism of the central stalk subunits to proton translocation. This protein is part of the stalk that links CF(0) to CF(1). It either transmits conformational changes from CF(0) to CF(1) or is implicated in proton conduction. The polypeptide is ATP synthase subunit delta (Bartonella bacilliformis (strain ATCC 35685 / KC583 / Herrer 020/F12,63)).